A 230-amino-acid polypeptide reads, in one-letter code: MKRGKKYLASLQMFDVKKTYPLQEAISLAKQTQVAKFDAAVECAFHLNLDPKKVDQNLRGALVLPHGTGKVLKVAVLAKGEQAKQAQEAQADYVGDQDLIDKIAKNWFDFDVLVATPEMMPQLSKLGRLLGPKGLMPNPKTGTVTNDVLQAVKEIKNGKIEYRLDKSGNIHAILGKVSFDETKLLENLKTLYLQLMAVKPRTVKGTYIKSVTISTTMAPGIKIDPVTISQ.

It belongs to the universal ribosomal protein uL1 family. As to quaternary structure, part of the 50S ribosomal subunit.

In terms of biological role, binds directly to 23S rRNA. The L1 stalk is quite mobile in the ribosome, and is involved in E site tRNA release. Its function is as follows. Protein L1 is also a translational repressor protein, it controls the translation of the L11 operon by binding to its mRNA. In Onion yellows phytoplasma (strain OY-M), this protein is Large ribosomal subunit protein uL1.